Here is a 223-residue protein sequence, read N- to C-terminus: Large ribosomal subunit protein bL21 (223 aa).

Belongs to the bacterial ribosomal protein bL21 family. Part of the 50S ribosomal subunit. Contacts protein L20.

This protein binds to 23S rRNA in the presence of protein L20. This chain is Large ribosomal subunit protein bL21, found in Mesorhizobium japonicum (strain LMG 29417 / CECT 9101 / MAFF 303099) (Mesorhizobium loti (strain MAFF 303099)).